Consider the following 387-residue polypeptide: Capsid protein (387 aa).

Basic residues predominate over residues 1 to 33 (MARTKSKPRKRTTVRKARRSVKRRTTTKGTKRK). Disordered regions lie at residues 1–47 (MART…RGVA) and 365–387 (KSAK…REFN). 2 short sequence motifs (nuclear localization signal) span residues 8–15 (PRKRTTVR) and 30–37 (TKRKTAGD). Residues 370–379 (NDQLNNNQDA) are compositionally biased toward low complexity.

Its subcellular location is the host nucleus. The protein localises to the virion. In terms of biological role, self-assembles to form the virion icosahedral capsid. The chain is Capsid protein from Chaetoceros protobacilladnavirus 2 (Chaetoceros sp. DNA virus 7).